A 329-amino-acid polypeptide reads, in one-letter code: Transmembrane protein I329L (329 aa).

The first 31 residues, 1–31, serve as a signal peptide directing secretion; the sequence is MLRVFIFFVFLGSGLAGKVKSPITCKYFISK. Asparagine 32, asparagine 39, asparagine 44, asparagine 58, asparagine 76, asparagine 82, asparagine 101, asparagine 185, and asparagine 219 each carry an N-linked (GlcNAc...) asparagine; by host glycan. Residues 32–239 lie on the Extracellular side of the membrane; the sequence is NNTWYKYNVT…NTERYKNCYP (208 aa). The helical transmembrane segment at 240–260 threads the bilayer; it reads FVLVSIICSCISSLFLLICLL. Topologically, residues 261–329 are cytoplasmic; that stretch reads RTICKKYSCT…EKKVSCSRRK (69 aa).

This sequence belongs to the asfivirus I329L family. Post-translationally, highly glycosylated.

The protein localises to the host endoplasmic reticulum membrane. It is found in the host Golgi apparatus membrane. Viral TLR3 homolog that probably prevents TLR3 dimerization and subsequent induction of IFN. Inhibits dsRNA-stimulated activation of NF-kB and IRF3. In Ornithodoros (relapsing fever ticks), this protein is Transmembrane protein I329L.